The following is a 74-amino-acid chain: Ubiquitin-like protein FUBI (74 aa).

This sequence belongs to the ubiquitin family.

The chain is Ubiquitin-like protein FUBI (FAU) from Bos taurus (Bovine).